The following is an 85-amino-acid chain: Toxin BmKaTx10 (85 aa).

Residues 1-19 (MNYLVMVSFALLLMTGVES) form the signal peptide. Residues 21-83 (RDGYIALPHN…VPIRVPGRCH (63 aa)) enclose the LCN-type CS-alpha/beta domain. 4 cysteine pairs are disulfide-bonded: C31/C82, C35/C55, C41/C65, and C45/C67.

This sequence belongs to the long (4 C-C) scorpion toxin superfamily. Sodium channel inhibitor family. Alpha subfamily. Expressed by the venom gland.

It localises to the secreted. In terms of biological role, alpha toxins bind voltage-independently at site-3 of sodium channels (Nav) and inhibit the inactivation of the activated channels, thereby blocking neuronal transmission. This chain is Toxin BmKaTx10, found in Olivierus martensii (Manchurian scorpion).